The primary structure comprises 42 residues: Photosystem I reaction center subunit IX (42 aa).

A helical membrane pass occupies residues 7-27 (YLSIAPVLATLWFGFLVGSLI).

It belongs to the PsaJ family.

It is found in the plastid membrane. Its function is as follows. May help in the organization of the PsaE and PsaF subunits. This chain is Photosystem I reaction center subunit IX, found in Aneura mirabilis (Parasitic liverwort).